A 294-amino-acid chain; its full sequence is Aquaporin-B (294 aa).

The interval 1–31 (MSLKRSDDYQDLEEGIAMEDGGNIKDEEEKP) is disordered. Residues 1 to 42 (MSLKRSDDYQDLEEGIAMEDGGNIKDEEEKPLDPIEEQNKKR) lie on the Cytoplasmic side of the membrane. Residues 22-31 (GNIKDEEEKP) show a composition bias toward basic and acidic residues. The chain crosses the membrane as a helical span at residues 43-63 (WVLIRAVLGELLCTFLFVYVL). At 64–79 (CATSANFIRLGSPPNP) the chain is on the extracellular side. Ser75 carries O-linked (GalNAc...) serine glycosylation. Residues 80–100 (VVGGLSTGFAAVALIYSFADV) traverse the membrane as a helical segment. At 101–123 (SGAHFNPAVTFATCVTRKTSITK) the chain is on the cytoplasmic side. The NPA 1 motif lies at 106-108 (NPA). The helical transmembrane segment at 124–144 (GLMYVGAQLVGSVLASLILLA) threads the bilayer. The Extracellular segment spans residues 145-172 (TFPGNFPGDKNAASAVAIAPSTDANIGN). The chain crosses the membrane as a helical span at residues 173-193 (AFLTELVLTFILVYVIFAVAF). Over 194 to 224 (DTVDNSVKTKVVGKSSSNNLTIYTTSGQTKA) the chain is Cytoplasmic. The required for water permeability stretch occupies residues 208-219 (SSSNNLTIYTTS). Residues 225–245 (GFAPIAIGFTLGFLCFLGGSV) form a helical membrane-spanning segment. Over 246–268 (SGGAFNPARVFGTALVGNNWTRH) the chain is Extracellular. An NPA 2 motif is present at residues 251 to 253 (NPA). A helical transmembrane segment spans residues 269–289 (WMYWIADFLGAGLAGFAQKFF). Topologically, residues 290 to 294 (SSTHK) are cytoplasmic.

The protein belongs to the MIP/aquaporin (TC 1.A.8) family. Glycosylated and non-glycosylated forms exist throughout all developmental stages.

It is found in the cell membrane. It localises to the cytoplasmic vesicle. Functionally, putatively gated water-specific channel, requiring a cysteine residue within the channel. Impermeable to water, glycerol and urea when expressed in Xenopus oocytes. Not regulated by pH; channels remain impermeable to water at pH 7.4 and 5.2. The protein is Aquaporin-B of Dictyostelium discoideum (Social amoeba).